The chain runs to 385 residues: Protein-glutamate methylesterase/protein-glutamine glutaminase (385 aa).

The residue at position 53 (aspartate 53) is a 4-aspartylphosphate. Positions 196 to 385 (KHKTGKIIVV…EIADHVLRRS (190 aa)) constitute a CheB-type methylesterase domain. Catalysis depends on residues serine 208, histidine 234, and aspartate 330.

It belongs to the CheB family. In terms of processing, phosphorylated by CheA. Phosphorylation of the N-terminal regulatory domain activates the methylesterase activity.

The protein resides in the cytoplasm. It carries out the reaction [protein]-L-glutamate 5-O-methyl ester + H2O = L-glutamyl-[protein] + methanol + H(+). The catalysed reaction is L-glutaminyl-[protein] + H2O = L-glutamyl-[protein] + NH4(+). Its function is as follows. Involved in chemotaxis. Part of a chemotaxis signal transduction system that modulates chemotaxis in response to various stimuli. Catalyzes the demethylation of specific methylglutamate residues introduced into the chemoreceptors (methyl-accepting chemotaxis proteins or MCP) by CheR. Also mediates the irreversible deamidation of specific glutamine residues to glutamic acid. This chain is Protein-glutamate methylesterase/protein-glutamine glutaminase, found in Borreliella burgdorferi (strain ATCC 35210 / DSM 4680 / CIP 102532 / B31) (Borrelia burgdorferi).